The primary structure comprises 859 residues: Active breakpoint cluster region-related protein (859 aa).

Residues 26–84 (TDEYDGEGNEEQKGPPEGSETMPYIDESPTMSPQLSARSQGGGDGVSPTPPEGLAPGVE) are disordered. Positions 54-64 (PTMSPQLSARS) are enriched in polar residues. Ser57 bears the Phosphoserine mark. In terms of domain architecture, DH spans 91–284 (MRKLVLSGFL…QNFLSSINED (194 aa)). A PH domain is found at 301 to 459 (QLVKDGFLVE…WREAIQKLQK (159 aa)). The C2 domain maps to 484–613 (TVHNIPVTSN…ETKNWHTDVI (130 aa)). Residues 647 to 845 (VKISVVTKRE…YYLQHPPISF (199 aa)) enclose the Rho-GAP domain.

In terms of assembly, interacts with DLG4. Highly enriched in the brain. Much weaker expression in heart, lung and muscle.

The protein resides in the cell projection. It localises to the dendritic spine. It is found in the axon. Its subcellular location is the synapse. Its function is as follows. Protein with a unique structure having two opposing regulatory activities toward small GTP-binding proteins. The C-terminus is a GTPase-activating protein domain which stimulates GTP hydrolysis by RAC1, RAC2 and CDC42. Accelerates the intrinsic rate of GTP hydrolysis of RAC1 or CDC42, leading to down-regulation of the active GTP-bound form. The central Dbl homology (DH) domain functions as a guanine nucleotide exchange factor (GEF) that modulates the GTPases CDC42, RHOA and RAC1. Promotes the conversion of CDC42, RHOA and RAC1 from the GDP-bound to the GTP-bound form. Functions as an important negative regulator of neuronal RAC1 activity. Regulates macrophage functions such as CSF-1 directed motility and phagocytosis through the modulation of RAC1 activity. The chain is Active breakpoint cluster region-related protein from Homo sapiens (Human).